We begin with the raw amino-acid sequence, 378 residues long: Cytochrome b (378 aa).

The next 4 membrane-spanning stretches (helical) occupy residues 35 to 55, 79 to 101, 114 to 134, and 180 to 200; these read FGSL…FLAM, WIIR…CHIG, TWIM…LGYV, and FFSL…LHIF. Heme b is bound by residues His-85 and His-99. Positions 184 and 198 each coordinate heme b. His-203 contributes to the a ubiquinone binding site. A run of 4 helical transmembrane segments spans residues 226–246, 290–310, 326–346, and 350–370; these read YSAK…FISF, LGGV…PLTH, FFWL…QPVC, and VMCS…CGPL.

Belongs to the cytochrome b family. The main subunits of complex b-c1 are: cytochrome b, cytochrome c1 and the Rieske protein. Requires heme b as cofactor.

It is found in the mitochondrion inner membrane. Component of the ubiquinol-cytochrome c reductase complex (complex III or cytochrome b-c1 complex) that is part of the mitochondrial respiratory chain. The b-c1 complex mediates electron transfer from ubiquinol to cytochrome c. Contributes to the generation of a proton gradient across the mitochondrial membrane that is then used for ATP synthesis. The chain is Cytochrome b (mt:Cyt-b) from Paraspadella gotoi (Arrow worm).